Consider the following 453-residue polypeptide: Glucose N-acetyltransferase 1-B (453 aa).

The Cytoplasmic segment spans residues 1–8 (MLKRKVRY). A helical; Signal-anchor for type II membrane protein membrane pass occupies residues 9–29 (LLLIVVVFTGIILSVEAIMRF). Residues 30-453 (QLNKNVDYYL…LESRAICQVN (424 aa)) are Lumenal-facing. Asparagine 108, asparagine 126, and asparagine 176 each carry an N-linked (GlcNAc...) asparagine glycan. Positions 187–189 (DND) match the DXD motif.

Belongs to the GNT1 family.

Its subcellular location is the golgi apparatus membrane. The protein localises to the vacuole membrane. Its function is as follows. N-acetylglucosaminyltransferase involved in the Golgi-specific modification of N-linked glycans. The protein is Glucose N-acetyltransferase 1-B (GNT1-B) of Kluyveromyces lactis (strain ATCC 8585 / CBS 2359 / DSM 70799 / NBRC 1267 / NRRL Y-1140 / WM37) (Yeast).